Reading from the N-terminus, the 302-residue chain is MTSTVAQICSDLKGAIDKKDELRIAFIASEYSSPSRLKIAQSYEATYKTPITEAIKKSLKGGTAEDLLVNMWVSRHEHRAELINKALGGSSDEEAIRELVFLCNPEDWHETASVYNQKYQKIMQDAVTKAIGSKSHWAKLVAGWMEHKREDRGSVENDVKYLKELIDAPVTDGNALAQFFASTTPDEYTQIADKFCEEYNLSIDQALVRPLKENEDDLEAYAAAHFALHGLPVLAAQLINKACRPKNGNERSICRITTLMVDQCLAAKYAYKLYGDMGADLSRCFDERMAPILRTLWRVTDA.

Annexin repeat units lie at residues 1–72 (MTST…VNMW), 74–144 (SRHE…VAGW), 153–226 (GSVE…AAHF), and 230–298 (GLPV…TLWR).

The protein belongs to the annexin family. Giardin subunit alpha subfamily.

Its subcellular location is the cytoplasm. It is found in the cytoskeleton. In terms of biological role, giardins are involved in parasite attachment to the intestinal mucosa and in the cytoskeletal disassembly and reassembly that marks the transition from infectious trophozoite to transmissible cyst. They may interact with other cytoskeletal proteins such as microtubules in the microribbons or crossbridges, to maintain the integrity of the ventral disk. This Giardia intestinalis (Giardia lamblia) protein is Giardin subunit alpha-5.